We begin with the raw amino-acid sequence, 319 residues long: Peroxidase 62 (319 aa).

A signal peptide spans 1–22 (MGLVRSFALVIVFLSCLIAVYG). 4 disulfides stabilise this stretch: Cys34–Cys110, Cys67–Cys72, Cys116–Cys315, and Cys195–Cys226. The active-site Proton acceptor is His65. Residues Asp66, Val69, Gly71, Asp73, and Ser75 each coordinate Ca(2+). Pro157 contacts substrate. His188 contacts heme b. Thr189 is a Ca(2+) binding site. Asn204 is a glycosylation site (N-linked (GlcNAc...) asparagine). Ca(2+) contacts are provided by Asp239, Ser242, and Asp247. N-linked (GlcNAc...) asparagine glycosylation occurs at Asn253.

The protein belongs to the peroxidase family. Classical plant (class III) peroxidase subfamily. The cofactor is heme b. It depends on Ca(2+) as a cofactor. In terms of tissue distribution, mainly expressed in roots.

It is found in the secreted. The enzyme catalyses 2 a phenolic donor + H2O2 = 2 a phenolic radical donor + 2 H2O. Removal of H(2)O(2), oxidation of toxic reductants, biosynthesis and degradation of lignin, suberization, auxin catabolism, response to environmental stresses such as wounding, pathogen attack and oxidative stress. These functions might be dependent on each isozyme/isoform in each plant tissue. This is Peroxidase 62 (PER62) from Arabidopsis thaliana (Mouse-ear cress).